Reading from the N-terminus, the 700-residue chain is MTMFNTIKREFQYGNQQVVIETGRIARQANSILVHMGGVTVLVAAVVKSDAKEGQNFFPLTVNYQEKMYAAGKIPGAYGKREGRASESETLTSRLIDRPIRPLFPEGYVNEIQITATVVSSDKTQSADIAALIGASAALAISDAPFNGPVAAARVGFINGEYVLNPTLEELKESDLDLVVAGTKSAVLMVESEAAELSEDQMLGAVLYGHQQQQIVIDNIASMAAEIGTAKQQYTAPVRNQTLETGMKEQFGTQVSDAYTITDKQARYSKLDEIKDAALAALAGDAESESYADTVSELKEIYNDLKYRTVRDNILSGKPRIDGRDLETVRALDVQVGVLPFTHGSALFTRGETQALVTTTLGNTRDVNMIDSLAGTIRDHFMLHYNFPHFSVGETGREGIPKRREIGHGRLARRGVQAMLPDSDRFPYVIRVVSEITESNGSSSMASVCGASLALMDAGVPIKAPVAGIAMGLVKEGERFAVLSDILGDEDHLGDMDFKVAGSKDGITALQMDIKIEGITPDIMEQALKQAHAGRIHILDAMNKVLPESRTEINAHAPNYAVIEINPDKIRDVIGKGGATIRQLTEETGAVIDIDDAGTIRIFGENKAATKAAIAKIEAITAEVEVGKTYEGTVARIVDFGAFINVLPNTDGLVHISQIADERVENVSDYLKEGQIVKVLVQDVDNRGRIKLTMKGIEQS.

2 residues coordinate Mg(2+): Asp-491 and Asp-497. The KH domain maps to 558 to 617; sequence PNYAVIEINPDKIRDVIGKGGATIRQLTEETGAVIDIDDAGTIRIFGENKAATKAAIAKI. One can recognise an S1 motif domain in the interval 627–695; that stretch reads GKTYEGTVAR…NRGRIKLTMK (69 aa).

This sequence belongs to the polyribonucleotide nucleotidyltransferase family. In terms of assembly, component of the RNA degradosome, which is a multiprotein complex involved in RNA processing and mRNA degradation. It depends on Mg(2+) as a cofactor.

Its subcellular location is the cytoplasm. It carries out the reaction RNA(n+1) + phosphate = RNA(n) + a ribonucleoside 5'-diphosphate. Its function is as follows. Involved in mRNA degradation. Catalyzes the phosphorolysis of single-stranded polyribonucleotides processively in the 3'- to 5'-direction. This chain is Polyribonucleotide nucleotidyltransferase, found in Psychrobacter cryohalolentis (strain ATCC BAA-1226 / DSM 17306 / VKM B-2378 / K5).